The following is a 75-amino-acid chain: Small ribosomal subunit protein bS18 (75 aa).

The protein belongs to the bacterial ribosomal protein bS18 family. In terms of assembly, part of the 30S ribosomal subunit. Forms a tight heterodimer with protein bS6.

Functionally, binds as a heterodimer with protein bS6 to the central domain of the 16S rRNA, where it helps stabilize the platform of the 30S subunit. This Sodalis glossinidius (strain morsitans) protein is Small ribosomal subunit protein bS18.